The primary structure comprises 122 residues: Ferredoxin (122 aa).

A disordered region spans residues 1-33 (MSHDRRLTVGSLLPNQPRPVAVPKAPSVVQPSK). The tract at residues 8 to 14 (TVGSLLP) is targeting peptide. The 2Fe-2S ferredoxin-type domain occupies 40–122 (AIIRLEQNGR…FRLACQANME (83 aa)). [2Fe-2S] cluster-binding residues include Cys75, Cys80, Cys83, and Cys117.

This sequence belongs to the 2Fe2S plant-type ferredoxin family. The cofactor is [2Fe-2S] cluster.

It localises to the encapsulin nanocompartment. Cargo protein of a type 1 encapsulin nanocompartment. An iron-binding protein probably involved in iron mineralization in the encapsulin nanocompartment. 2 different cargo proteins have been identified (IMEF and Fer); when both are expressed in E.coli with the shell protein only IMEF is detected within the nanocompartment. E.coli expressing all 3 genes stores the largest amount of iron and is protected from Fe/H2O2-induced oxidative stress. The polypeptide is Ferredoxin (Bacillus thermotolerans (Quasibacillus thermotolerans)).